A 113-amino-acid polypeptide reads, in one-letter code: Prefoldin subunit beta (113 aa).

Belongs to the prefoldin subunit beta family. Heterohexamer of two alpha and four beta subunits.

Its subcellular location is the cytoplasm. Functionally, molecular chaperone capable of stabilizing a range of proteins. Seems to fulfill an ATP-independent, HSP70-like function in archaeal de novo protein folding. This Methanococcus vannielii (strain ATCC 35089 / DSM 1224 / JCM 13029 / OCM 148 / SB) protein is Prefoldin subunit beta.